The following is a 360-amino-acid chain: Methylthioribose-1-phosphate isomerase (360 aa).

The active-site Proton donor is the D246.

This sequence belongs to the eIF-2B alpha/beta/delta subunits family. MtnA subfamily.

It localises to the cytoplasm. The protein localises to the nucleus. The enzyme catalyses 5-(methylsulfanyl)-alpha-D-ribose 1-phosphate = 5-(methylsulfanyl)-D-ribulose 1-phosphate. Its pathway is amino-acid biosynthesis; L-methionine biosynthesis via salvage pathway; L-methionine from S-methyl-5-thio-alpha-D-ribose 1-phosphate: step 1/6. Its function is as follows. Catalyzes the interconversion of methylthioribose-1-phosphate (MTR-1-P) into methylthioribulose-1-phosphate (MTRu-1-P). This is Methylthioribose-1-phosphate isomerase from Aedes aegypti (Yellowfever mosquito).